Consider the following 277-residue polypeptide: Glutamate racemase (277 aa).

Substrate is bound by residues 25 to 26 and 57 to 58; these read DS and YG. C89 acts as the Proton donor/acceptor in catalysis. Position 90-91 (90-91) interacts with substrate; it reads NT. Residue C204 is the Proton donor/acceptor of the active site. Position 205–206 (205–206) interacts with substrate; sequence TH.

The protein belongs to the aspartate/glutamate racemases family.

It catalyses the reaction L-glutamate = D-glutamate. It functions in the pathway cell wall biogenesis; peptidoglycan biosynthesis. Provides the (R)-glutamate required for cell wall biosynthesis. The chain is Glutamate racemase from Brucella ovis (strain ATCC 25840 / 63/290 / NCTC 10512).